Consider the following 448-residue polypeptide: Signal recognition particle 54 kDa protein (448 aa).

Residues 107 to 114, 189 to 193, and 247 to 250 each bind GTP; these read GIQGSGKT, DSAGR, and TKLD.

The protein belongs to the GTP-binding SRP family. SRP54 subfamily. In terms of assembly, part of the signal recognition particle protein translocation system, which is composed of SRP and FtsY. Archaeal SRP consists of a 7S RNA molecule of 300 nucleotides and two protein subunits: SRP54 and SRP19.

The protein localises to the cytoplasm. It carries out the reaction GTP + H2O = GDP + phosphate + H(+). In terms of biological role, involved in targeting and insertion of nascent membrane proteins into the cytoplasmic membrane. Binds to the hydrophobic signal sequence of the ribosome-nascent chain (RNC) as it emerges from the ribosomes. The SRP-RNC complex is then targeted to the cytoplasmic membrane where it interacts with the SRP receptor FtsY. The chain is Signal recognition particle 54 kDa protein from Thermococcus onnurineus (strain NA1).